The primary structure comprises 389 residues: Glutamate 5-kinase (389 aa).

Lys16 is a binding site for ATP. Ser56, Asp143, and Asn155 together coordinate substrate. 175–176 (SD) serves as a coordination point for ATP. Residues 281-358 (AGELHVDDGA…AEIEAILGYA (78 aa)) form the PUA domain.

It belongs to the glutamate 5-kinase family.

The protein localises to the cytoplasm. The enzyme catalyses L-glutamate + ATP = L-glutamyl 5-phosphate + ADP. Its pathway is amino-acid biosynthesis; L-proline biosynthesis; L-glutamate 5-semialdehyde from L-glutamate: step 1/2. Catalyzes the transfer of a phosphate group to glutamate to form L-glutamate 5-phosphate. In Rhizobium etli (strain CIAT 652), this protein is Glutamate 5-kinase.